We begin with the raw amino-acid sequence, 456 residues long: MEKLWGGRFQGKSEAWIDDFGASISFDQKMAKEDLAGSLAHVAMLGKCGIIPASEAAEITAGLKILQEKLAFGELEFSTVNEDIHLNIEKLLHEEIGSVAGKLHTARSRNDQVATDMHLYLKQAVAEIIQSLKHLRVVLVQKAELHVETIMPGYTHLQHAQPLSFAHHLLAYFGMFTRDLERLEESVKRIDISPLGSAALAGTTFPIDRAYSAELLGFSAVYENSLDGVSDRDFIIEFLSNSSILMMHLSRFCEELILWTSHEFQFVELTDAFSTGSSIMPQKKNPDMAELIRGKTGRVYGNLFGMLTVLKGLPLAYNKDLQEDKEGMFDTLETVQTSLDIFAGMIETMKVNTEIMEESTQKDFSNATELADYLAKKGVPFREAHEIVGKLVLECTQNGIYLQDVALSHYQEINPLIEEDIYVVLSSKTAVQKRNSYGGTGFDQIKVALENAKKTL.

The protein belongs to the lyase 1 family. Argininosuccinate lyase subfamily.

It is found in the cytoplasm. It catalyses the reaction 2-(N(omega)-L-arginino)succinate = fumarate + L-arginine. Its pathway is amino-acid biosynthesis; L-arginine biosynthesis; L-arginine from L-ornithine and carbamoyl phosphate: step 3/3. The sequence is that of Argininosuccinate lyase from Listeria monocytogenes serovar 1/2a (strain ATCC BAA-679 / EGD-e).